The sequence spans 319 residues: Beta-ketoacyl-[acyl-carrier-protein] synthase III (319 aa).

Active-site residues include cysteine 110 and histidine 246. Residues 247–251 (QANYR) form an ACP-binding region. The active site involves asparagine 276.

Belongs to the thiolase-like superfamily. FabH family. In terms of assembly, homodimer.

Its subcellular location is the cytoplasm. The enzyme catalyses malonyl-[ACP] + acetyl-CoA + H(+) = 3-oxobutanoyl-[ACP] + CO2 + CoA. It participates in lipid metabolism; fatty acid biosynthesis. In terms of biological role, catalyzes the condensation reaction of fatty acid synthesis by the addition to an acyl acceptor of two carbons from malonyl-ACP. Catalyzes the first condensation reaction which initiates fatty acid synthesis and may therefore play a role in governing the total rate of fatty acid production. Possesses both acetoacetyl-ACP synthase and acetyl transacylase activities. Its substrate specificity determines the biosynthesis of branched-chain and/or straight-chain of fatty acids. This Lactobacillus delbrueckii subsp. bulgaricus (strain ATCC 11842 / DSM 20081 / BCRC 10696 / JCM 1002 / NBRC 13953 / NCIMB 11778 / NCTC 12712 / WDCM 00102 / Lb 14) protein is Beta-ketoacyl-[acyl-carrier-protein] synthase III.